Here is a 106-residue protein sequence, read N- to C-terminus: uncharacterized protein (106 aa).

2 helical membrane passes run 17–37 (AGLL…AVLV) and 55–75 (FSSS…FMIF).

The protein localises to the membrane. This is an uncharacterized protein from Saccharomyces cerevisiae (strain ATCC 204508 / S288c) (Baker's yeast).